Here is a 101-residue protein sequence, read N- to C-terminus: Large ribosomal subunit protein bL25 (101 aa).

The protein belongs to the bacterial ribosomal protein bL25 family. As to quaternary structure, part of the 50S ribosomal subunit; part of the 5S rRNA/L5/L18/L25 subcomplex. Contacts the 5S rRNA. Binds to the 5S rRNA independently of L5 and L18.

This is one of the proteins that binds to the 5S RNA in the ribosome where it forms part of the central protuberance. This Thermosynechococcus vestitus (strain NIES-2133 / IAM M-273 / BP-1) protein is Large ribosomal subunit protein bL25.